The sequence spans 616 residues: Probable galacturonosyltransferase 4 (616 aa).

The Cytoplasmic segment spans residues 1–6; sequence MMVKLR. The chain crosses the membrane as a helical; Signal-anchor for type II membrane protein span at residues 7–29; it reads NLVLFFMLLTVVAHILLYTDPAA. At 30 to 616 the chain is on the lumenal side; the sequence is SFKTPFSKRD…VYLRECNINP (587 aa). A disordered region spans residues 132-152; it reads QTSEKVDEQPEPNAFGAKKDT. N-linked (GlcNAc...) asparagine glycosylation is found at N291, N326, N378, N481, and N514.

Belongs to the glycosyltransferase 8 family. As to expression, expressed in roots, inflorescences, siliques, leaves and stems.

The protein localises to the golgi apparatus membrane. The protein operates within glycan metabolism; pectin biosynthesis. Its function is as follows. May be involved in pectin and/or xylans biosynthesis in cell walls. The sequence is that of Probable galacturonosyltransferase 4 (GAUT4) from Arabidopsis thaliana (Mouse-ear cress).